The sequence spans 87 residues: Large ribosomal subunit protein bL27 (87 aa).

Residues 1–21 form a disordered region; it reads MAHKKAGGSSRNGRDSESKRL.

Belongs to the bacterial ribosomal protein bL27 family.

The protein is Large ribosomal subunit protein bL27 of Burkholderia ambifaria (strain MC40-6).